Consider the following 142-residue polypeptide: Large ribosomal subunit protein uL11 (142 aa).

Belongs to the universal ribosomal protein uL11 family. In terms of assembly, part of the ribosomal stalk of the 50S ribosomal subunit. Interacts with L10 and the large rRNA to form the base of the stalk. L10 forms an elongated spine to which L12 dimers bind in a sequential fashion forming a multimeric L10(L12)X complex. Post-translationally, one or more lysine residues are methylated.

Its function is as follows. Forms part of the ribosomal stalk which helps the ribosome interact with GTP-bound translation factors. This is Large ribosomal subunit protein uL11 from Nitrobacter hamburgensis (strain DSM 10229 / NCIMB 13809 / X14).